The following is a 298-amino-acid chain: Bifunctional protein FolD (298 aa).

NADP(+) is bound by residues 166–168 (GRS), Ser195, and Ile236.

The protein belongs to the tetrahydrofolate dehydrogenase/cyclohydrolase family. Homodimer.

The catalysed reaction is (6R)-5,10-methylene-5,6,7,8-tetrahydrofolate + NADP(+) = (6R)-5,10-methenyltetrahydrofolate + NADPH. It catalyses the reaction (6R)-5,10-methenyltetrahydrofolate + H2O = (6R)-10-formyltetrahydrofolate + H(+). The protein operates within one-carbon metabolism; tetrahydrofolate interconversion. Its function is as follows. Catalyzes the oxidation of 5,10-methylenetetrahydrofolate to 5,10-methenyltetrahydrofolate and then the hydrolysis of 5,10-methenyltetrahydrofolate to 10-formyltetrahydrofolate. This chain is Bifunctional protein FolD, found in Chlorobium phaeobacteroides (strain BS1).